Reading from the N-terminus, the 61-residue chain is uncharacterized protein (61 aa).

Residues 34–61 (TDVEDIDRLISMLDDLEAKYERFKKDWE) are a coiled coil.

This is an uncharacterized protein from Bacillus subtilis (strain 168).